The primary structure comprises 1015 residues: SPOC domain-containing protein 1 (1015 aa).

4 disordered regions span residues methionine 73 to leucine 97, glycine 118 to glycine 159, leucine 213 to glutamate 320, and alanine 344 to leucine 406. A compositionally biased stretch (basic and acidic residues) spans serine 304–glutamate 320. Residues alanine 373–proline 382 are compositionally biased toward polar residues. Positions alanine 388–aspartate 397 are enriched in basic and acidic residues. A TFIIS central domain is found at valine 410–tyrosine 530. Residues isoleucine 643 to proline 685 form a disordered region. Residues tryptophan 688 to proline 791 enclose the SPOC domain. Disordered regions lie at residues proline 858–glycine 906 and glutamine 967–cysteine 1015. Over residues glutamine 967–valine 978 the composition is skewed to polar residues.

As to quaternary structure, interacts with DNMT3A, DNMT3C and DNMT3L. Interacts with C19orf84 homolog. Interacts with SPIN1; promoting recruitment to transposons marked with histone H3 trimethylated at both 'Lys-4' and 'Lys-9' (H3K4me3K9me3).

The protein resides in the nucleus. It localises to the chromosome. In terms of biological role, protein adapter that acts as an essential executor of PIWIL4-piRNA pathway directed transposon DNA methylation and silencing in the male embryonic germ cells. Recruited to young transposons, which are specifically marked with histone H3 trimethylated at both 'Lys-4' and 'Lys-9' (H3K4me3K9me3), via its association with SPIN1 chromatin reader, and associates with the de novo DNA methylation machinery and repressive chromatin remodeling complexes. Following this, PIWIL4 engages with nascent transposable element transcript to direct piRNA-directed DNA methylation. Not required for piRNA biosynthesis. This chain is SPOC domain-containing protein 1, found in Mus musculus (Mouse).